The chain runs to 745 residues: Junction plakoglobin (745 aa).

At Met1 the chain carries N-acetylmethionine. Thr14 carries an O-linked (GlcNAc) threonine glycan. A phosphoserine mark is found at Ser99 and Ser125. ARM repeat units lie at residues 132-171 (NYQD…QLSK), 172-215 (KEAS…LSHH), 216-255 (REGL…NLLL), 258-297 (EGAK…LLAY), 298-341 (GNQE…LSVC), 342-381 (PSNK…NLSD), 383-420 (ATKQ…NLTC), 423-464 (SKNK…HLTS), 470-510 (EMAQ…NLAL), 512-551 (PANH…QPYT), 574-613 (PMNR…ELAQ), and 615-661 (KEAA…PDYR). The segment at 132–297 (NYQDDAELAT…TTDCLQLLAY (166 aa)) is interaction with DSC1 and DSG1. A Phosphoserine modification is found at Ser182. The tract at residues 574–661 (PMNRMEIFRL…ISEDKNPDYR (88 aa)) is interaction with DSC1. Phosphoserine is present on residues Ser665 and Ser730.

This sequence belongs to the beta-catenin family. Homodimer. Component of an E-cadherin/catenin adhesion complex composed of at least E-cadherin/CDH1 and gamma-catenin/JUP, and possibly alpha-catenin/CTNNA1; the complex is located to adherens junctions. The stable association of CTNNA1 is controversial as CTNNA1 was shown not to bind to F-actin when assembled in the complex. Interacts with MUC1. Interacts with CAV1. Interacts with PTPRJ. Interacts with DSG1. Interacts with DSC1 and DSC2. Interacts with PKP2. Interacts with PKP3 (via N-terminus); the interaction is required for PKP3 localization to desmosome cell-cell junctions. Interacts with DSG4. In terms of processing, may be phosphorylated by FER.

It localises to the cell junction. It is found in the adherens junction. The protein resides in the desmosome. The protein localises to the cytoplasm. Its subcellular location is the cytoskeleton. It localises to the cell membrane. It is found in the nucleus. In terms of biological role, common junctional plaque protein. The membrane-associated plaques are architectural elements in an important strategic position to influence the arrangement and function of both the cytoskeleton and the cells within the tissue. The presence of plakoglobin in both the desmosomes and in the intermediate junctions suggests that it plays a central role in the structure and function of submembranous plaques. Acts as a substrate for VE-PTP and is required by it to stimulate VE-cadherin function in endothelial cells. Can replace beta-catenin in E-cadherin/catenin adhesion complexes which are proposed to couple cadherins to the actin cytoskeleton. This chain is Junction plakoglobin, found in Sus scrofa (Pig).